A 250-amino-acid chain; its full sequence is uncharacterized protein (250 aa).

It belongs to the carbohydrate kinase PfkB family.

This is an uncharacterized protein from Archaeoglobus fulgidus (strain ATCC 49558 / DSM 4304 / JCM 9628 / NBRC 100126 / VC-16).